The chain runs to 673 residues: Pesticin receptor (673 aa).

An N-terminal signal peptide occupies residues 1–22 (MKMTRLYPLALGGLLLPAIANA). The TonB box motif lies at 30–37 (STLVVTAS). One can recognise a TBDR plug domain in the interval 41 to 155 (SRSASANNVS…QGGIINIVTQ (115 aa)). A TBDR beta-barrel domain is found at 160-672 (TPRGYIEGGV…TVGINTRIDF (513 aa)). The TonB C-terminal box signature appears at 657 to 673 (QVNMGRTVGINTRIDFF).

It belongs to the TonB-dependent receptor family.

It is found in the cell outer membrane. Functionally, receptor for the bacteriocin pesticin and for the siderophore yersiniabactin. The protein is Pesticin receptor (fyuA) of Yersinia pestis.